The primary structure comprises 547 residues: CTP synthase (547 aa).

Residues 1–265 form an amidoligase domain region; it reads MARYIFITGG…DQAVLDAFDI (265 aa). Position 13 (serine 13) interacts with CTP. Serine 13 serves as a coordination point for UTP. Residues 14–19 and aspartate 71 contribute to the ATP site; that span reads SLGKGL. Residues aspartate 71 and glutamate 139 each contribute to the Mg(2+) site. CTP contacts are provided by residues 146 to 148, 186 to 191, and lysine 222; these read DIE and KTKPTQ. UTP is bound by residues 186 to 191 and lysine 222; that span reads KTKPTQ. The Glutamine amidotransferase type-1 domain maps to 291 to 546; that stretch reads KVAIVGKYTQ…IRAAKENSRL (256 aa). Glycine 353 contributes to the L-glutamine binding site. The active-site Nucleophile; for glutamine hydrolysis is the cysteine 380. Residues 381–384, glutamate 404, and arginine 474 contribute to the L-glutamine site; that span reads LGMQ. Catalysis depends on residues histidine 519 and glutamate 521.

It belongs to the CTP synthase family. In terms of assembly, homotetramer.

It catalyses the reaction UTP + L-glutamine + ATP + H2O = CTP + L-glutamate + ADP + phosphate + 2 H(+). It carries out the reaction L-glutamine + H2O = L-glutamate + NH4(+). The catalysed reaction is UTP + NH4(+) + ATP = CTP + ADP + phosphate + 2 H(+). Its pathway is pyrimidine metabolism; CTP biosynthesis via de novo pathway; CTP from UDP: step 2/2. With respect to regulation, allosterically activated by GTP, when glutamine is the substrate; GTP has no effect on the reaction when ammonia is the substrate. The allosteric effector GTP functions by stabilizing the protein conformation that binds the tetrahedral intermediate(s) formed during glutamine hydrolysis. Inhibited by the product CTP, via allosteric rather than competitive inhibition. Its function is as follows. Catalyzes the ATP-dependent amination of UTP to CTP with either L-glutamine or ammonia as the source of nitrogen. Regulates intracellular CTP levels through interactions with the four ribonucleotide triphosphates. This Roseobacter denitrificans (strain ATCC 33942 / OCh 114) (Erythrobacter sp. (strain OCh 114)) protein is CTP synthase.